The primary structure comprises 1017 residues: LSVTRKQCLELGMVLSLSPMGTYLEGTMGCLQLKHGHGGFVIHNTTQLRIHFIQGKDAILIRMPKIFLRLQSATSLDNQNVRNEFAWLEQTFKRRAYGQQSQSSSIILPEGKGSFWIHWITTQDGFCGLPLVSVNDGHVVGIHGLTSNDSEKNFFVPFTDGFEKEYLDNADNLSWDKHWFWEPSKIAWGPLNLVEEQPKEEFKISKLVSDLFGNTVAVQSRKERWVLDAMEGNLVACGQADSALVTKHVVKGKCPYFAQYLSLHDGAXQFFEPLMGAYQPSRLNKDAFKKDFFKYNKPVVLNEVDFNAFEKAVEGVITMMVDFEFAECLFVTDPDEIYGSLNMKAAVGAQYKGKKQDYFSGMDSFDKERLLYLSCERLFNGEKGIWNGSLKAELRPIEKVQANKTRTFTAAPLDTLLGAKVCVDDFNNQFYSFNLKCPWTVGMTKFYGGWDKLMRSLPDGWTYCHADGSQFDSSLTPLLLNAVLSIRCCFMEDWWVGREMLENLYAEIVYTPILAPDGTIFKKFRGNNSGQPSTVVDNTLMVVIAMYYSCCKQGWSEEDIERRLVFFANGDDIILAVKDEDVWLYDTLSASFAELGLNYNFDERTKKREELWFMSHQAMLVDGIYIPKLEPERIVSILEWDRSKELMHRTEAICAAMIEAWGYTELLQEIRKFYLWLLSKDEFKELAASGKAPYIAETALRKLYTDVNTQPSELQRYLEVLDFNHIDGCCESVSLQSGKETVENLDAGKESKKDASDKGNKPQNSQVGQGSKEPTKTGTVSKDVNVGSKGKEVPRLQKITKKMNLPTVGGKIILSLDHLLEYKPSQVDLFNTRATKTQFESWYSAVKVEYDLNDEQMGVIMNGFMVWCIDNGTSPDVNGVWVMMDGEEQVEYPLKPIVENAKPTLRQIMHHFSDAAEAYIEMRNSESPYMPRYGLLRNLRDRELARYAFDFYEVTSKTPNRAREAIAQMKAAALAGVNSRLFGLDGNISTNSENTGRHTARDVNQNMHTLLGMGPPQ.

Positions 1–195 (LSVTRKQCLE…IAWGPLNLVE (195 aa)) constitute a Peptidase C4 domain. Residues aspartate 57 and cysteine 127 each act as for nuclear inclusion protein A activity in the active site. Residues 461-585 (WTYCHADGSQ…AVKDEDVWLY (125 aa)) enclose the RdRp catalytic domain. The segment covering 746-760 (DAGKESKKDASDKGN) has biased composition (basic and acidic residues). The tract at residues 746–787 (DAGKESKKDASDKGNKPQNSQVGQGSKEPTKTGTVSKDVNVG) is disordered.

This sequence belongs to the potyviridae genome polyprotein family. In terms of processing, genome polyprotein of potyviruses undergoes post-translational proteolytic processing by the main proteinase NIa-pro resulting in the production of at least ten individual proteins. The P1 proteinase and the HC-pro cleave only their respective C-termini autocatalytically. 6K1 is essential for proper proteolytic separation of P3 from CI.

It is found in the virion. The catalysed reaction is Hydrolyzes glutaminyl bonds, and activity is further restricted by preferences for the amino acids in P6 - P1' that vary with the species of potyvirus, e.g. Glu-Xaa-Xaa-Tyr-Xaa-Gln-|-(Ser or Gly) for the enzyme from tobacco etch virus. The natural substrate is the viral polyprotein, but other proteins and oligopeptides containing the appropriate consensus sequence are also cleaved.. It catalyses the reaction RNA(n) + a ribonucleoside 5'-triphosphate = RNA(n+1) + diphosphate. Its function is as follows. Has RNA-binding and proteolytic activities. Functionally, an RNA-dependent RNA polymerase that plays an essential role in the virus replication. In terms of biological role, involved in aphid transmission, cell-to-cell and systemis movement, encapsidation of the viral RNA and in the regulation of viral RNA amplification. The sequence is that of Genome polyprotein from Watermelon mosaic virus II (isolate USA).